The chain runs to 491 residues: Probable allantoate deiminase (491 aa).

The first 32 residues, 1–32, serve as a signal peptide directing secretion; it reads MALLLSYPRRHPSIHLLILSAYALFLLPILDG. The N-linked (GlcNAc...) asparagine glycan is linked to Asn-109. Residues His-120, Asp-131, Glu-168, and His-234 each contribute to the Mn(2+) site. N-linked (GlcNAc...) asparagine glycosylation is found at Asn-265 and Asn-343. Residue His-454 coordinates Mn(2+).

The protein belongs to the peptidase M20A family. As to quaternary structure, homodimer. Requires Mn(2+) as cofactor.

It localises to the endoplasmic reticulum. It catalyses the reaction allantoate + H2O + 2 H(+) = (S)-2-ureidoglycine + NH4(+) + CO2. Functionally, involved in the catabolism of purine nucleotides. The sequential activity of AAH, UGLYAH and UAH allows a complete purine breakdown without the intermediate generation of urea. The chain is Probable allantoate deiminase from Oryza sativa subsp. japonica (Rice).